A 125-amino-acid chain; its full sequence is Large ribosomal subunit protein eL32 (125 aa).

The protein belongs to the eukaryotic ribosomal protein eL32 family.

The chain is Large ribosomal subunit protein eL32 (rpl32e) from Sulfolobus acidocaldarius (strain ATCC 33909 / DSM 639 / JCM 8929 / NBRC 15157 / NCIMB 11770).